The following is an 89-amino-acid chain: OMEGA-ectatommitoxin(02)-Rm1b (89 aa).

An N-terminal signal peptide occupies residues 1-30; the sequence is MKDSYISIVIAYLMVTFILVSSMPIEGEKG. 3 disulfides stabilise this stretch: C39/C52, C47/C68, and C70/C79. Residues 43-80 form the EGF-like domain; the sequence is YANYCFNGKCVHFVAQDEPGKPCYSCICDKFYIGKRCG.

The protein belongs to the EGF domain peptide family. In terms of tissue distribution, expressed by the venom gland.

It localises to the secreted. Functionally, ant peptide with probable defensive activity which acts as a potent agonist of the mammalian epidermal growth factor receptor (EGFR). Mimics, both structurally and functionally, vertebrate epidermal growth factor (EGF) peptide hormones. In vivo, intraplantar injection in mice causes long-lasting (several days) hypersensitivity of the injected paw to both mechanical and thermal stimuli. Its long-lasting effect is unusual for venom toxins whose effects are usually immediate. One possible explanation is that it would reduce the duration of a nest attack, discourage future attacks, or enhance the actions of subsequent exposure to other pain-inducing venom peptides. The chain is OMEGA-ectatommitoxin(02)-Rm1b from Rhytidoponera metallica (Australian green-headed ant).